We begin with the raw amino-acid sequence, 215 residues long: NADH-quinone oxidoreductase subunit C (215 aa).

The protein belongs to the complex I 30 kDa subunit family. As to quaternary structure, NDH-1 is composed of 14 different subunits. Subunits NuoB, C, D, E, F, and G constitute the peripheral sector of the complex.

It localises to the cell inner membrane. The enzyme catalyses a quinone + NADH + 5 H(+)(in) = a quinol + NAD(+) + 4 H(+)(out). Functionally, NDH-1 shuttles electrons from NADH, via FMN and iron-sulfur (Fe-S) centers, to quinones in the respiratory chain. The immediate electron acceptor for the enzyme in this species is believed to be ubiquinone. Couples the redox reaction to proton translocation (for every two electrons transferred, four hydrogen ions are translocated across the cytoplasmic membrane), and thus conserves the redox energy in a proton gradient. The protein is NADH-quinone oxidoreductase subunit C of Bordetella parapertussis (strain 12822 / ATCC BAA-587 / NCTC 13253).